The primary structure comprises 635 residues: Probable serine/threonine-protein kinase DDB_G0270146 (635 aa).

One can recognise a Protein kinase domain in the interval 77 to 329 (VISDIAIGKG…AKELLSHPWI (253 aa)). ATP contacts are provided by residues 83–91 (IGKGAFATV) and Lys106. Catalysis depends on Asp199, which acts as the Proton acceptor. Residues 360 to 392 (SLLSNSSGGDDSVTDSDLSISNQSSRSSSFLLD) are compositionally biased toward low complexity. The segment at 360 to 405 (SLLSNSSGGDDSVTDSDLSISNQSSRSSSFLLDDGGGGGGSKNHTV) is disordered. Coiled coils occupy residues 417-456 (IEFN…KYRE) and 536-585 (KKAL…KDSS). Positions 540-582 (EAQKRREKEQEKLKEQEKLKEKKKEKDIKKEKDKKDKKDKQLK) are enriched in basic and acidic residues. Residues 540–635 (EAQKRREKEQ…GRSSSKIFNE (96 aa)) are disordered. The span at 583–598 (DSSSSTTTTNSTPSTP) shows a compositional bias: low complexity. Over residues 626 to 635 (GRSSSKIFNE) the composition is skewed to polar residues.

Belongs to the protein kinase superfamily. STE Ser/Thr protein kinase family. Mg(2+) is required as a cofactor.

It catalyses the reaction L-seryl-[protein] + ATP = O-phospho-L-seryl-[protein] + ADP + H(+). It carries out the reaction L-threonyl-[protein] + ATP = O-phospho-L-threonyl-[protein] + ADP + H(+). The sequence is that of Probable serine/threonine-protein kinase DDB_G0270146 from Dictyostelium discoideum (Social amoeba).